A 727-amino-acid polypeptide reads, in one-letter code: Glucans biosynthesis glucosyltransferase H (727 aa).

The interval 18–43 is disordered; sequence SAMPNERPGAMEPQSLSQMPEGFPRR. The next 7 helical transmembrane spans lie at 58–78, 94–114, 278–298, 408–428, 460–480, 496–516, and 572–592; these read FFVV…MGAV, LFAI…AGFF, LQQF…GWWV, IMAY…LMLA, LFYI…LLLL, ILSV…MMFI, and LLAW…ISAW.

This sequence belongs to the glycosyltransferase 2 family. OpgH subfamily.

Its subcellular location is the cell inner membrane. It functions in the pathway glycan metabolism; osmoregulated periplasmic glucan (OPG) biosynthesis. Functionally, involved in the biosynthesis of osmoregulated periplasmic glucans (OPGs). The sequence is that of Glucans biosynthesis glucosyltransferase H from Shewanella sp. (strain ANA-3).